The sequence spans 369 residues: Histidinol-phosphate aminotransferase (369 aa).

N6-(pyridoxal phosphate)lysine is present on Lys-223.

It belongs to the class-II pyridoxal-phosphate-dependent aminotransferase family. Histidinol-phosphate aminotransferase subfamily. As to quaternary structure, homodimer. The cofactor is pyridoxal 5'-phosphate.

It carries out the reaction L-histidinol phosphate + 2-oxoglutarate = 3-(imidazol-4-yl)-2-oxopropyl phosphate + L-glutamate. It functions in the pathway amino-acid biosynthesis; L-histidine biosynthesis; L-histidine from 5-phospho-alpha-D-ribose 1-diphosphate: step 7/9. In Shouchella clausii (strain KSM-K16) (Alkalihalobacillus clausii), this protein is Histidinol-phosphate aminotransferase.